The primary structure comprises 225 residues: Ferric nitrobindin-like protein (225 aa).

The GXWXGXG motif lies at 78-84; that stretch reads GVWRGTG.

This sequence belongs to the nitrobindin family.

In Corynebacterium diphtheriae (strain ATCC 700971 / NCTC 13129 / Biotype gravis), this protein is Ferric nitrobindin-like protein.